Here is a 577-residue protein sequence, read N- to C-terminus: MRASRFFISTLKEAPSDAEIVSHKLMMRAGMIKKIGSGIYTYMPMGLRVIRKVEAIIREEMNNAHAIELLMPLVQPAELWQETGRWDKMGAELMRVKDRHGREFAIQPTSEEVVTDVVRTEIKSYRQLPINFYHIQTKFRDERRPRFGLMRGREFTMKDAYSFDRDIDGLKKSYQIMFDAYVKIFNRFGLQFRAVAADNGAIGGSGSHEFHVIADTGEDALVYCPNSDYAANMEAAEALPLSSARAAPTQALTKTATPGKAKCEDVAALLNLPLAQTVKSIVLTVEKEDKGVTSKQVWLLLLRGDHELNEVKAAKIPGIAGYRFASEAEIIEWFDTPPGYLGPINTKKPVNLVVDRTVANMHDFVCGANEVDFHFTGVNWGRDLPEAQVFDIRNVVEGDPSPDGKGTLAIQRGIEVGHVFQLGTAYSESMKATYLDENGKPQLIQMGCYGIGVTRILGAAIEQNFDDKGIIWPTALAPFEVVLCPMGYDRSEGVKAETDKLYEALQAAGVDVILDDRGERPGAMFADWELIGVPHRIVIGDRGLKEGKLEYQGRRDAAATPVALEEMLGFVQAKLAN.

Belongs to the class-II aminoacyl-tRNA synthetase family. ProS type 1 subfamily. As to quaternary structure, homodimer.

The protein localises to the cytoplasm. It carries out the reaction tRNA(Pro) + L-proline + ATP = L-prolyl-tRNA(Pro) + AMP + diphosphate. Its function is as follows. Catalyzes the attachment of proline to tRNA(Pro) in a two-step reaction: proline is first activated by ATP to form Pro-AMP and then transferred to the acceptor end of tRNA(Pro). As ProRS can inadvertently accommodate and process non-cognate amino acids such as alanine and cysteine, to avoid such errors it has two additional distinct editing activities against alanine. One activity is designated as 'pretransfer' editing and involves the tRNA(Pro)-independent hydrolysis of activated Ala-AMP. The other activity is designated 'posttransfer' editing and involves deacylation of mischarged Ala-tRNA(Pro). The misacylated Cys-tRNA(Pro) is not edited by ProRS. The protein is Proline--tRNA ligase of Janthinobacterium sp. (strain Marseille) (Minibacterium massiliensis).